The chain runs to 133 residues: Transcription antitermination protein NusB (133 aa).

This sequence belongs to the NusB family.

Involved in transcription antitermination. Required for transcription of ribosomal RNA (rRNA) genes. Binds specifically to the boxA antiterminator sequence of the ribosomal RNA (rrn) operons. This Shewanella denitrificans (strain OS217 / ATCC BAA-1090 / DSM 15013) protein is Transcription antitermination protein NusB.